Here is a 162-residue protein sequence, read N- to C-terminus: Protein FAM167B (162 aa).

It belongs to the FAM167 (SEC) family.

This Mus musculus (Mouse) protein is Protein FAM167B (Fam167b).